Consider the following 96-residue polypeptide: Beta-defensin 132 (96 aa).

A signal peptide spans 1 to 22; the sequence is MKFLLLVLAALRFLTQVIPASG. Disulfide bonds link Cys-27–Cys-55, Cys-35–Cys-49, and Cys-39–Cys-56. The segment at 74–96 is disordered; that stretch reads HWQSRRRNTQRKDKKQQTTVTSS. A compositionally biased stretch (basic residues) spans 76–87; that stretch reads QSRRRNTQRKDK.

It belongs to the beta-defensin family.

The protein resides in the secreted. Has antibacterial activity. The chain is Beta-defensin 132 (DEFB132) from Hylobates lar (Lar gibbon).